The chain runs to 294 residues: MKQLTLAKTVKGVGIGLHKGEPIEITLEPLEANSGIVFFRSDLNASYKASPENVINTQMATVLGDDRGFISTIEHLMSAINAYGIDNVRIVLNANEAPVMDGSSISFCMMLDEAEVKELDAPKKIMVIKKPVEVRDGNKFVRLTPTKEPRINYTIKFDNAVIGEQSYNFEFSKKNYIENIARARTFGFLKDVQALRSMNLALGGSLENTIVVDENRILNPEGLRFKDEFVRHKILDAIGDLTLLGYRVFGDYISYAGSHHLNHLLTKEVLKDKDAYEIVSLEKTTQKAYEKVFA.

Residues H75, H232, and D236 each coordinate Zn(2+). Residue H259 is the Proton donor of the active site.

The protein belongs to the LpxC family. The cofactor is Zn(2+).

It catalyses the reaction a UDP-3-O-[(3R)-3-hydroxyacyl]-N-acetyl-alpha-D-glucosamine + H2O = a UDP-3-O-[(3R)-3-hydroxyacyl]-alpha-D-glucosamine + acetate. It functions in the pathway glycolipid biosynthesis; lipid IV(A) biosynthesis; lipid IV(A) from (3R)-3-hydroxytetradecanoyl-[acyl-carrier-protein] and UDP-N-acetyl-alpha-D-glucosamine: step 2/6. Catalyzes the hydrolysis of UDP-3-O-myristoyl-N-acetylglucosamine to form UDP-3-O-myristoylglucosamine and acetate, the committed step in lipid A biosynthesis. In Campylobacter jejuni subsp. jejuni serotype O:23/36 (strain 81-176), this protein is UDP-3-O-acyl-N-acetylglucosamine deacetylase.